Consider the following 500-residue polypeptide: ATP synthase subunit alpha (500 aa).

169-176 provides a ligand contact to ATP; the sequence is GDRQTGKT.

This sequence belongs to the ATPase alpha/beta chains family. F-type ATPases have 2 components, CF(1) - the catalytic core - and CF(0) - the membrane proton channel. CF(1) has five subunits: alpha(3), beta(3), gamma(1), delta(1), epsilon(1). CF(0) has three main subunits: a(1), b(2) and c(9-12). The alpha and beta chains form an alternating ring which encloses part of the gamma chain. CF(1) is attached to CF(0) by a central stalk formed by the gamma and epsilon chains, while a peripheral stalk is formed by the delta and b chains.

It is found in the cell membrane. It carries out the reaction ATP + H2O + 4 H(+)(in) = ADP + phosphate + 5 H(+)(out). Functionally, produces ATP from ADP in the presence of a proton gradient across the membrane. The alpha chain is a regulatory subunit. This Lactococcus lactis subsp. cremoris (strain SK11) protein is ATP synthase subunit alpha.